Consider the following 364-residue polypeptide: Nucleoporin SEH1 (364 aa).

WD repeat units lie at residues 10 to 49, 55 to 96, 111 to 152, 160 to 210, 217 to 258, and 275 to 314; these read DHKD…EWNC, THSG…SNDK, DSRT…NLSQ, SCKL…RKYA, TVTD…KESS, and GHNS…NWKC. The disordered stretch occupies residues 326–364; it reads NGAAGQAGTPGAAGTPGGPASQNALQAVAGRKKAQLMPG. Low complexity predominate over residues 327–338; sequence GAAGQAGTPGAA. Over residues 355-364 the composition is skewed to basic residues; it reads GRKKAQLMPG.

The protein belongs to the WD repeat SEC13 family. As to quaternary structure, component of the Nup107-160 subcomplex of the nuclear pore complex (NPC). The Nup107-160 subcomplex includes NUP160, NUP133, NUP107, NUP98, NUP85, NUP43, NUP37, SEH1 and SEC13. Component of the GATOR2 subcomplex, composed of MIOS, SEC13, SEH1L, WDR24 and WDR59. The GATOR2 complex interacts with CASTOR1 and CASTOR2; the interaction is negatively regulated by arginine. The GATOR2 complex interacts with SESN1, SESN2 and SESN3; the interaction is negatively regulated by amino acids.

It localises to the chromosome. The protein localises to the centromere. It is found in the kinetochore. The protein resides in the nucleus. Its subcellular location is the nuclear pore complex. It localises to the lysosome membrane. With respect to regulation, the GATOR2 complex is negatively regulated by the upstream amino acid sensors CASTOR1 and SESN2, which sequester the GATOR2 complex in absence of amino acids. In the presence of abundant amino acids, GATOR2 is released from CASTOR1 and SESN2 and activated. Its function is as follows. Component of the Nup107-160 subcomplex of the nuclear pore complex (NPC). The Nup107-160 subcomplex is required for the assembly of a functional NPC. The Nup107-160 subcomplex is also required for normal kinetochore microtubule attachment, mitotic progression and chromosome segregation. This subunit plays a role in recruitment of the Nup107-160 subcomplex to the kinetochore. In terms of biological role, as a component of the GATOR2 complex, functions as an activator of the amino acid-sensing branch of the mTORC1 signaling pathway. The GATOR2 complex indirectly activates mTORC1 through the inhibition of the GATOR1 subcomplex. GATOR2 probably acts as an E3 ubiquitin-protein ligase toward GATOR1. In the presence of abundant amino acids, the GATOR2 complex mediates ubiquitination of the NPRL2 core component of the GATOR1 complex, leading to GATOR1 inactivation. In the absence of amino acids, GATOR2 is inhibited, activating the GATOR1 complex. The chain is Nucleoporin SEH1 (seh1l) from Osmerus mordax (Rainbow smelt).